The following is a 490-amino-acid chain: ATP synthase subunit beta, chloroplastic (490 aa).

170-177 (GGAGVGKT) serves as a coordination point for ATP.

This sequence belongs to the ATPase alpha/beta chains family. In terms of assembly, F-type ATPases have 2 components, CF(1) - the catalytic core - and CF(0) - the membrane proton channel. CF(1) has five subunits: alpha(3), beta(3), gamma(1), delta(1), epsilon(1). CF(0) has four main subunits: a(1), b(1), b'(1) and c(9-12).

The protein localises to the plastid. The protein resides in the chloroplast thylakoid membrane. It carries out the reaction ATP + H2O + 4 H(+)(in) = ADP + phosphate + 5 H(+)(out). Its function is as follows. Produces ATP from ADP in the presence of a proton gradient across the membrane. The catalytic sites are hosted primarily by the beta subunits. This is ATP synthase subunit beta, chloroplastic from Cressa truxillensis (Spreading alkaliweed).